Consider the following 942-residue polypeptide: Alanine--tRNA ligase (942 aa).

H586, H590, C695, and H699 together coordinate Zn(2+).

This sequence belongs to the class-II aminoacyl-tRNA synthetase family. The cofactor is Zn(2+).

Its subcellular location is the cytoplasm. It carries out the reaction tRNA(Ala) + L-alanine + ATP = L-alanyl-tRNA(Ala) + AMP + diphosphate. Functionally, catalyzes the attachment of alanine to tRNA(Ala) in a two-step reaction: alanine is first activated by ATP to form Ala-AMP and then transferred to the acceptor end of tRNA(Ala). Also edits incorrectly charged Ser-tRNA(Ala) and Gly-tRNA(Ala) via its editing domain. In Akkermansia muciniphila (strain ATCC BAA-835 / DSM 22959 / JCM 33894 / BCRC 81048 / CCUG 64013 / CIP 107961 / Muc), this protein is Alanine--tRNA ligase.